The sequence spans 97 residues: SAGA-associated factor 11 (97 aa).

An SGF11-type zinc finger spans residues 70 to 91 (IECNVCGREVSGNRFAAHLVRC).

This sequence belongs to the SGF11 family. Component of the 1.8 MDa SAGA transcription coactivator-HAT complex. SAGA is built of 5 distinct domains with specialized functions. Within the SAGA complex, SUS1, SGF11, SGF73 and UBP8 form an additional subcomplex of SAGA called the DUB module (deubiquitination module). Interacts directly with SGF73, SUS1 and UBP8.

It is found in the nucleus. Functions as a component of the transcription regulatory histone acetylation (HAT) complex SAGA. At the promoters, SAGA is required for recruitment of the basal transcription machinery. It influences RNA polymerase II transcriptional activity through different activities such as TBP interaction and promoter selectivity, interaction with transcription activators, and chromatin modification through histone acetylation and deubiquitination. SAGA acetylates nucleosomal histone H3 to some extent (to form H3K9ac, H3K14ac, H3K18ac and H3K23ac). SAGA interacts with DNA via upstream activating sequences (UASs). Involved in transcriptional regulation of a subset of SAGA-regulated genes. Within the SAGA complex, participates in a subcomplex, that specifically deubiquitinates histones H2B. The protein is SAGA-associated factor 11 of Kluyveromyces lactis (strain ATCC 8585 / CBS 2359 / DSM 70799 / NBRC 1267 / NRRL Y-1140 / WM37) (Yeast).